Reading from the N-terminus, the 352-residue chain is Thymidine kinase (352 aa).

Residue 26 to 33 (GSMGIGKT) coordinates ATP. Catalysis depends on Glu54, which acts as the Proton acceptor. Gln95 is a binding site for substrate. ATP is bound at residue Arg185. Arg191 lines the substrate pocket.

Belongs to the herpesviridae thymidine kinase family. As to quaternary structure, homodimer.

It catalyses the reaction thymidine + ATP = dTMP + ADP + H(+). Catalyzes the transfer of the gamma-phospho group of ATP to thymidine to generate dTMP in the salvage pathway of pyrimidine synthesis. The dTMP serves as a substrate for DNA polymerase during viral DNA replication. Allows the virus to be reactivated and to grow in non-proliferative cells lacking a high concentration of phosphorylated nucleic acid precursors. The sequence is that of Thymidine kinase from Gallus gallus (Chicken).